Here is a 303-residue protein sequence, read N- to C-terminus: Protoheme IX farnesyltransferase 1 (303 aa).

The next 9 helical transmembrane spans lie at 18 to 38 (PGIIMGNLISVAGGFLLAAQG), 42 to 62 (LTLMFATMIGLSLVVASGCAV), 91 to 111 (AVLSFGIGLGIIGFAMLAIFT), 114 to 134 (LAVLFAAIGYVVYVGVYSLYM), 139 to 159 (VYGTLVGSFSGAVPPVVGYCA), 169 to 189 (VILLLMFSLWQMPHSYAIAIF), 213 to 233 (LHIVLYIAVFAVVSALLPLAG), 235 to 255 (TGIAFMAVTFATSLWWLAMAL), and 274 to 294 (FSIITITALSVTMALDFQVVA).

The protein belongs to the UbiA prenyltransferase family. Protoheme IX farnesyltransferase subfamily.

The protein localises to the cell inner membrane. It carries out the reaction heme b + (2E,6E)-farnesyl diphosphate + H2O = Fe(II)-heme o + diphosphate. It functions in the pathway porphyrin-containing compound metabolism; heme O biosynthesis; heme O from protoheme: step 1/1. In terms of biological role, converts heme B (protoheme IX) to heme O by substitution of the vinyl group on carbon 2 of heme B porphyrin ring with a hydroxyethyl farnesyl side group. The protein is Protoheme IX farnesyltransferase 1 of Shewanella frigidimarina (strain NCIMB 400).